A 252-amino-acid polypeptide reads, in one-letter code: LexA repressor (252 aa).

Positions 1-46 are disordered; that stretch reads MPEENRGGHQPYTEESSVSALHPVRTDDSVGSSAEQTGDAPTLTER. Positions 67-87 form a DNA-binding region, H-T-H motif; it reads IREIGEAVGLSSPSSVAHQLK. Residues Ser176 and Lys213 each act as for autocatalytic cleavage activity in the active site.

This sequence belongs to the peptidase S24 family. In terms of assembly, homodimer.

The enzyme catalyses Hydrolysis of Ala-|-Gly bond in repressor LexA.. Its function is as follows. Represses a number of genes involved in the response to DNA damage (SOS response), including recA and lexA. In the presence of single-stranded DNA, RecA interacts with LexA causing an autocatalytic cleavage which disrupts the DNA-binding part of LexA, leading to derepression of the SOS regulon and eventually DNA repair. This Thermobifida fusca (strain YX) protein is LexA repressor.